A 363-amino-acid chain; its full sequence is tRNA N6-adenosine threonylcarbamoyltransferase (363 aa).

Residues His-117 and His-121 each contribute to the Fe cation site. Substrate contacts are provided by residues 139–143 (LVSGG), Asp-172, Gly-185, and Asn-287. Position 315 (Asp-315) interacts with Fe cation.

This sequence belongs to the KAE1 / TsaD family. Requires Fe(2+) as cofactor.

Its subcellular location is the cytoplasm. It catalyses the reaction L-threonylcarbamoyladenylate + adenosine(37) in tRNA = N(6)-L-threonylcarbamoyladenosine(37) in tRNA + AMP + H(+). In terms of biological role, required for the formation of a threonylcarbamoyl group on adenosine at position 37 (t(6)A37) in tRNAs that read codons beginning with adenine. Is involved in the transfer of the threonylcarbamoyl moiety of threonylcarbamoyl-AMP (TC-AMP) to the N6 group of A37, together with TsaE and TsaB. TsaD likely plays a direct catalytic role in this reaction. This Cereibacter sphaeroides (strain ATCC 17025 / ATH 2.4.3) (Rhodobacter sphaeroides) protein is tRNA N6-adenosine threonylcarbamoyltransferase.